The chain runs to 368 residues: snRNA-activating protein complex subunit 1 (368 aa).

Residues 1-168 form an SNAPC3-binding region; that stretch reads MGTPPGLQTD…EEFKDPSDRV (168 aa). Residues 164–268 are SNAPC4-binding; that stretch reads PSDRVMKLIT…AESLAKIKSK (105 aa). Disordered stretches follow at residues 224-257 and 275-368; these read QQWHKDRKNPSLKSKTNDGEEKMEGNSQETERCE and QASK…RRKH. A compositionally biased stretch (basic and acidic residues) spans 238-257; that stretch reads KTNDGEEKMEGNSQETERCE. A phosphoserine mark is found at Ser289 and Ser290.

In terms of assembly, part of the SNAPc complex composed of 5 subunits: SNAPC1, SNAPC2, SNAPC3, SNAPC4 and SNAPC5. SNAPC1 interacts with SNAPC3, SNAPC4 and TBP.

It localises to the nucleus. In terms of biological role, part of the SNAPc complex required for the transcription of both RNA polymerase II and III small-nuclear RNA genes. Binds to the proximal sequence element (PSE), a non-TATA-box basal promoter element common to these 2 types of genes. Recruits TBP and BRF2 to the U6 snRNA TATA box. The chain is snRNA-activating protein complex subunit 1 (SNAPC1) from Homo sapiens (Human).